The chain runs to 406 residues: MTNAQPTELISLPSELLCHLFTYLPQRQLITEIPLVCRRFNTILNDDKFWSRRIRTEQKVRLPDCELKHPEYEPKKSFYAMHRQRDRWRAWETQTVITAPGHSATVDSVMLFENNNKQFCLSGSRDRTIRLWSIENARNGEDTEQNPWTVAKDDTAHSGWIWNMAQESTSTNFYTTSWDSTVKSWHITDNGALQNLNSVNVGSAAQCISCSGNENEVVCTTFAKRVAVIDSRTFQVVADHKLHKRAVIALAVQGDKIFTSGEDRLMMMVDRRNFSKPVLFEYSPTAYKSCLSLQCNQLLTSTSDGKVKLYDANNFNVLQTYSVGSYTRQSFLEHGAHLIMARSLKRNYTFSIYSPGTRSQQWCASHELAAEPAKFDYSPSSRTLAIGNGDSSILFCLPASAPDQEN.

One can recognise an F-box domain in the interval 6–53; sequence PTELISLPSELLCHLFTYLPQRQLITEIPLVCRRFNTILNDDKFWSRR. WD repeat units lie at residues 101-142, 156-195, 242-279, 281-320, and 365-406; these read GHSA…NGED, AHSGWIWNMAQESTSTNFYTTSWDSTVKSWHITDNGALQN, LHKRAVIALAVQGDKIFTSGEDRLMMMVDRRNFSKPVL, EYSPTAYKSCLSLQCNQLLTSTSDGKVKLYDANNFNVLQT, and SHEL…DQEN.

As to quaternary structure, may interact with the SCF ubiquitin ligase complex component skr-1. Expressed in several neurons in the head, tail and ventral cord, but absent in touch receptor neurons in adults. Expressed in GABAergic and cholinergic motor neurons.

It localises to the perikaryon. In terms of biological role, plays a role in mechanosensory transduction (touch sensitivity), touch receptor neuron development and synapse formation. Regulates expression of the protein snb-1 and the distribution of synaptic vesicles at synapses to promote synaptic transmission at the neuromuscular junctions of GABAergic motor neurons. This Caenorhabditis elegans protein is F-box/WD repeat-containing protein mec-15.